We begin with the raw amino-acid sequence, 249 residues long: DNA repair protein RecO (249 aa).

The protein belongs to the RecO family.

Functionally, involved in DNA repair and RecF pathway recombination. In Leptospira biflexa serovar Patoc (strain Patoc 1 / Ames), this protein is DNA repair protein RecO.